A 130-amino-acid chain; its full sequence is Iron-sulfur cluster insertion protein ErpA (130 aa).

The iron-sulfur cluster site is built by cysteine 46, cysteine 116, and cysteine 118.

This sequence belongs to the HesB/IscA family. As to quaternary structure, homodimer. Requires iron-sulfur cluster as cofactor.

Required for insertion of 4Fe-4S clusters for at least IspG. The polypeptide is Iron-sulfur cluster insertion protein ErpA (Legionella pneumophila subsp. pneumophila (strain Philadelphia 1 / ATCC 33152 / DSM 7513)).